Consider the following 408-residue polypeptide: Probable medium-chain specific acyl-CoA dehydrogenase 2, mitochondrial (408 aa).

The transit peptide at 1–5 (MLSRL) directs the protein to the mitochondrion. Residues 143-152 (YCVTEPGAGS) and 176-178 (WIT) contribute to the FAD site. Ser152 contributes to the substrate binding site. 263 to 266 (DMTR) is a binding site for substrate. Residues 291-293 (RKA), 301-302 (HQ), and 355-359 (MLFRC) contribute to the FAD site. The active-site Proton acceptor is the Glu382. Residue Gly383 coordinates substrate. Position 384 to 386 (384 to 386 (TSQ)) interacts with FAD. Arg394 contributes to the substrate binding site.

This sequence belongs to the acyl-CoA dehydrogenase family. In terms of assembly, homotetramer. It depends on FAD as a cofactor.

Its subcellular location is the mitochondrion matrix. The enzyme catalyses a medium-chain 2,3-saturated fatty acyl-CoA + oxidized [electron-transfer flavoprotein] + H(+) = a medium-chain (2E)-enoyl-CoA + reduced [electron-transfer flavoprotein]. Its pathway is lipid metabolism; mitochondrial fatty acid beta-oxidation. In terms of biological role, this enzyme is specific for acyl chain lengths of 4 to 16. In Caenorhabditis briggsae, this protein is Probable medium-chain specific acyl-CoA dehydrogenase 2, mitochondrial.